Reading from the N-terminus, the 201-residue chain is Large ribosomal subunit protein bL25 (201 aa).

It belongs to the bacterial ribosomal protein bL25 family. CTC subfamily. Part of the 50S ribosomal subunit; part of the 5S rRNA/L5/L18/L25 subcomplex. Contacts the 5S rRNA. Binds to the 5S rRNA independently of L5 and L18.

Functionally, this is one of the proteins that binds to the 5S RNA in the ribosome where it forms part of the central protuberance. This Burkholderia multivorans (strain ATCC 17616 / 249) protein is Large ribosomal subunit protein bL25.